Here is a 240-residue protein sequence, read N- to C-terminus: Eukaryotic translation initiation factor 4E-2 (240 aa).

The tract at residues 1 to 29 (MVVMDSPVSGRMADQNIDPNTTTSPSPIE) is disordered. Over residues 17 to 26 (IDPNTTTSPS) the composition is skewed to polar residues. 2 EIF4G-binding regions span residues 65–68 (HCFQ) and 75–111 (FDNP…NNIH). Residues 83–88 (NQVIWG), lysine 115, and 133–134 (WE) each bind mRNA. Cysteine 138 and cysteine 176 are joined by a disulfide. The segment at 159-168 (NTLLALVGEQ) is EIF4G-binding. Residues 183 to 188 (RTRGDR) and 228 to 232 (KTLDR) contribute to the mRNA site.

It belongs to the eukaryotic initiation factor 4E family. As to quaternary structure, EIF4F is a multi-subunit complex, the composition of which varies with external and internal environmental conditions. It is composed of at least EIF4A, EIF4E and EIF4G. EIF4E is also known to interact with other partners. In higher plants two isoforms of EIF4F have been identified, named isoform EIF4F and isoform EIF(iso)4F. Isoform EIF4F has subunits p220 and p26, whereas isoform EIF(iso)4F has subunits p82 and p28. Post-translationally, according to the redox status, the Cys-138-Cys-176 disulfide bridge may have a role in regulating protein function by affecting its ability to bind capped mRNA.

Its subcellular location is the nucleus. The protein resides in the cytoplasm. Functionally, component of the protein complex eIF4F, which is involved in the recognition of the mRNA cap, ATP-dependent unwinding of 5'-terminal secondary structure and recruitment of mRNA to the ribosome. Recognizes and binds the 7-methylguanosine-containing mRNA cap during an early step in the initiation of protein synthesis and facilitates ribosome binding by inducing the unwinding of the mRNAs secondary structures. This is Eukaryotic translation initiation factor 4E-2 from Arabidopsis thaliana (Mouse-ear cress).